Reading from the N-terminus, the 32-residue chain is Mu-theraphotoxin-Se1a (32 aa).

Disulfide bonds link Cys2–Cys17, Cys9–Cys22, and Cys16–Cys28.

This sequence belongs to the neurotoxin 10 (Hwtx-1) family. In terms of tissue distribution, expressed by the venom gland.

Its subcellular location is the secreted. Voltage-gated sodium channel Nav1.7/SCN9A inhibitor. In Selenocosmia effera (Tarantula spider), this protein is Mu-theraphotoxin-Se1a.